Here is a 278-residue protein sequence, read N- to C-terminus: MAAPEEKALQVAEWLKKVFGDHPIPQYEMNSRTTEILYHLSERNRVRDRDISLVIEDLKQKASEYESEAKRLEDFLMESVNFSPANLSKSGSRFLNALVDSAIALEIKDTSLASFIPAVNDLTSDLFRTKSKSEEMKLELGKLEKNLTATLVLEKCLREDLKKAELQLSAEKAKVDSRLQNMDFLKAKAAEFRFGIKAAEEQLSARGMDASLSHRSLAALSEKLSELKEQTIPLKKKLESYLDLMPSPSLAQLKIEEAKRELDAIEAELTKKVDMMGL.

Coiled coils occupy residues 49-79 (RDIS…LMES), 128-178 (RTKS…VDSR), and 249-277 (SLAQ…DMMG).

It belongs to the HAUS1 family. Component of the HAUS augmin-like complex. The complex interacts with the gamma-tubulin ring complex and this interaction is required for spindle assembly. Associates with microtubules. The interaction with microtubules is strong during mitosis, while it is weak or absent during interphase. It is unclear whether this interaction is direct or indirect. Interacts with EML3 (phosphorylated at 'Thr-882').

It localises to the cytoplasm. The protein resides in the cytoskeleton. The protein localises to the microtubule organizing center. It is found in the centrosome. Its subcellular location is the spindle. It localises to the spindle pole. Functionally, contributes to mitotic spindle assembly, maintenance of centrosome integrity and completion of cytokinesis as part of the HAUS augmin-like complex. The chain is HAUS augmin-like complex subunit 1 (Haus1) from Mus musculus (Mouse).